Here is a 233-residue protein sequence, read N- to C-terminus: Somatolactin (233 aa).

Positions 1-24 are cleaved as a signal peptide; sequence MNMMQVMQSVVWAVLLWPCLVSLG. Cystine bridges form between Cys29–Cys39, Cys89–Cys205, and Cys222–Cys230.

It belongs to the somatotropin/prolactin family. Pituitary gland.

Its subcellular location is the secreted. Functionally, may be associated with ion regulation and reproduction. This Oncorhynchus keta (Chum salmon) protein is Somatolactin.